A 567-amino-acid chain; its full sequence is Urease subunit alpha (567 aa).

Residues 129 to 567 (GGIDAHIHFI…LPLTQRYCLF (439 aa)) enclose the Urease domain. His134, His136, and Lys217 together coordinate Ni(2+). An N6-carboxylysine modification is found at Lys217. His219 provides a ligand contact to substrate. The Ni(2+) site is built by His246 and His272. The active-site Proton donor is the His320. Position 360 (Asp360) interacts with Ni(2+).

The protein belongs to the metallo-dependent hydrolases superfamily. Urease alpha subunit family. Heterotrimer of UreA (gamma), UreB (beta) and UreC (alpha) subunits. Three heterotrimers associate to form the active enzyme. Ni cation is required as a cofactor. Carboxylation allows a single lysine to coordinate two nickel ions.

The protein localises to the cytoplasm. The enzyme catalyses urea + 2 H2O + H(+) = hydrogencarbonate + 2 NH4(+). It participates in nitrogen metabolism; urea degradation; CO(2) and NH(3) from urea (urease route): step 1/1. This is Urease subunit alpha from Psychromonas ingrahamii (strain DSM 17664 / CCUG 51855 / 37).